The following is a 209-amino-acid chain: Imidazole glycerol phosphate synthase subunit HisH (209 aa).

Residues 1 to 205 form the Glutamine amidotransferase type-1 domain; sequence MIAIIDYGMG…QGVVEAWKSS (205 aa). Catalysis depends on cysteine 79, which acts as the Nucleophile. Residues histidine 180 and glutamate 182 contribute to the active site.

Heterodimer of HisH and HisF.

The protein resides in the cytoplasm. The enzyme catalyses 5-[(5-phospho-1-deoxy-D-ribulos-1-ylimino)methylamino]-1-(5-phospho-beta-D-ribosyl)imidazole-4-carboxamide + L-glutamine = D-erythro-1-(imidazol-4-yl)glycerol 3-phosphate + 5-amino-1-(5-phospho-beta-D-ribosyl)imidazole-4-carboxamide + L-glutamate + H(+). The catalysed reaction is L-glutamine + H2O = L-glutamate + NH4(+). It participates in amino-acid biosynthesis; L-histidine biosynthesis; L-histidine from 5-phospho-alpha-D-ribose 1-diphosphate: step 5/9. In terms of biological role, IGPS catalyzes the conversion of PRFAR and glutamine to IGP, AICAR and glutamate. The HisH subunit catalyzes the hydrolysis of glutamine to glutamate and ammonia as part of the synthesis of IGP and AICAR. The resulting ammonia molecule is channeled to the active site of HisF. In Bacillus cereus (strain G9842), this protein is Imidazole glycerol phosphate synthase subunit HisH.